The chain runs to 421 residues: Cyclin-A1 (421 aa).

The tract at residues 1–20 (MRRHSSKSGVALPPVGQGPD) is disordered.

The protein belongs to the cyclin family. Cyclin AB subfamily. As to quaternary structure, interacts with the CDK2 and the CDC2 protein kinases to form a serine/threonine kinase holoenzyme complex. The cyclin subunit imparts substrate specificity to the complex. Does not bind CDK4 and CDK5 (in vitro). The cyclin A1-CDK2 complex interacts with transcription factor E2F-1 and RB proteins. Found in a complex with CDK2, CABLES1 and CCNE1. Interacts with INCA1 and KLHDC9. Polyubiquitinated via 'Lys-11'-linked ubiquitin by the anaphase-promoting complex (APC/C), leading to its degradation by the proteasome. Deubiquitinated and stabilized by USP37 enables entry into S phase. Ubiquitinated during the G1 phase by the SCF(FBXO31) complex, leading to its proteasomal degradation.

It localises to the nucleus. May be involved in the control of the cell cycle at the G1/S (start) and G2/M (mitosis) transitions. May primarily function in the control of the germline meiotic cell cycle and additionally in the control of mitotic cell cycle in some somatic cells. This chain is Cyclin-A1 (Ccna1), found in Rattus norvegicus (Rat).